The sequence spans 121 residues: Small ribosomal subunit protein uS13 (121 aa).

Residues Val97 to Lys121 form a disordered region. Residues Gln100 to Lys121 show a composition bias toward basic residues.

It belongs to the universal ribosomal protein uS13 family. In terms of assembly, part of the 30S ribosomal subunit. Forms a loose heterodimer with protein S19. Forms two bridges to the 50S subunit in the 70S ribosome.

Located at the top of the head of the 30S subunit, it contacts several helices of the 16S rRNA. In the 70S ribosome it contacts the 23S rRNA (bridge B1a) and protein L5 of the 50S subunit (bridge B1b), connecting the 2 subunits; these bridges are implicated in subunit movement. Contacts the tRNAs in the A and P-sites. This is Small ribosomal subunit protein uS13 from Prochlorococcus marinus (strain MIT 9303).